Here is a 198-residue protein sequence, read N- to C-terminus: MSMGSRYAVKLTTDFDNPKWIARHKHMFNFLDINSNGQINLNEMVHKASNIICKKLGATEEQTKRHQKCVEDFFGGAGLEYDKDTTWPEYIEGWKRLAKTELERHSKNQVTLIRLWGDALFDIIDKDRNGSVSLDEWIQYTHCAGIQQSRGQCEATFAHCDLDGDGKLDVDEMTRQHLGFWYSVDPTCEGLYGGAVPY.

A propeptide spanning residues 1–8 (MSMGSRYA) is cleaved from the precursor. 3 EF-hand domains span residues 19–54 (KWIA…IICK), 118–147 (DALF…AGIQ), and 148–183 (QSRG…FWYS). Residues D32, N34, N36, Q38, E43, D125, D127, N129, S131, E136, D161, D163, D165, K167, and E172 each contribute to the Ca(2+) site.

Belongs to the aequorin family.

Functionally, ca(2+)-dependent bioluminescence photoprotein. Displays an emission peak at 470 nm (blue light). Trace amounts of calcium ion trigger the intramolecular oxidation of the chromophore, coelenterazine into coelenteramide and CO(2) with the concomitant emission of light. In Mitrocoma cellularia (Cross jellyfish), this protein is Mitrocomin (MI17).